We begin with the raw amino-acid sequence, 307 residues long: Myeloid-associated differentiation marker-like protein 2 (307 aa).

2 MARVEL domains span residues 17–154 and 159–303; these read AVTS…ARPG and YMAT…RIRF. Helical transmembrane passes span 53–73, 90–110, 129–149, 163–183, 198–218, 232–252, and 278–298; these read FCMAAWGFCFAFSVLVVACEF, AFAMLATLLCATAAVIYPLYF, LAASVFAGLLFLAYAAEVALT, VSGLLKIVQAFVACIIFGALV, VAVYSLCFMATVAVVVLSVMG, IVYTFLAVLLYLSAAVIWPVF, and LVVAIFTYVNLLLYIVDLAYS.

It belongs to the MAL family.

The protein localises to the membrane. This chain is Myeloid-associated differentiation marker-like protein 2 (Myadml2), found in Mus musculus (Mouse).